Consider the following 645-residue polypeptide: Chaperone protein DnaK (645 aa).

Threonine 201 carries the post-translational modification Phosphothreonine; by autocatalysis. The segment covering 606–629 (NTNNATAGDNNTTDTGSSSNSDGS) has biased composition (low complexity). Positions 606 to 645 (NTNNATAGDNNTTDTGSSSNSDGSKVVDSDYQEIDKKDGK) are disordered. The segment covering 630-645 (KVVDSDYQEIDKKDGK) has biased composition (basic and acidic residues).

The protein belongs to the heat shock protein 70 family.

Its function is as follows. Acts as a chaperone. The polypeptide is Chaperone protein DnaK (Ehrlichia ruminantium (strain Welgevonden)).